The primary structure comprises 211 residues: Phosphoheptose isomerase (211 aa).

The 162-residue stretch at 50–211 (IAGTFEDGGK…VERMLGYCRL (162 aa)) folds into the SIS domain. Residue 65 to 67 (NGG) coordinates substrate. Positions 74 and 78 each coordinate Zn(2+). Residues Glu78, 109–110 (ND), 135–137 (STS), Ser140, and Gln188 each bind substrate. Positions 188 and 196 each coordinate Zn(2+).

This sequence belongs to the SIS family. GmhA subfamily. It depends on Zn(2+) as a cofactor.

The protein localises to the cytoplasm. The enzyme catalyses 2 D-sedoheptulose 7-phosphate = D-glycero-alpha-D-manno-heptose 7-phosphate + D-glycero-beta-D-manno-heptose 7-phosphate. Its pathway is carbohydrate biosynthesis; D-glycero-D-manno-heptose 7-phosphate biosynthesis; D-glycero-alpha-D-manno-heptose 7-phosphate and D-glycero-beta-D-manno-heptose 7-phosphate from sedoheptulose 7-phosphate: step 1/1. Catalyzes the isomerization of sedoheptulose 7-phosphate in D-glycero-D-manno-heptose 7-phosphate. The polypeptide is Phosphoheptose isomerase (Pelodictyon phaeoclathratiforme (strain DSM 5477 / BU-1)).